The sequence spans 233 residues: Fibroblast growth factor 8 (233 aa).

The N-terminal stretch at 1 to 22 (MGSPRSALSCLLLHLLVLCLQA) is a signal peptide. A glycan (N-linked (GlcNAc...) asparagine) is linked at asparagine 155.

This sequence belongs to the heparin-binding growth factors family. Monomer. Homodimer. Interacts with FGFR1, FGFR2, FGFR3 and FGFR4. Affinity between fibroblast growth factors (FGFs) and their receptors is increased by heparan sulfate glycosaminoglycans that function as coreceptors.

It is found in the secreted. In terms of biological role, plays an important role in the regulation of embryonic development, cell proliferation, cell differentiation and cell migration. Required for normal brain, eye, ear and limb development during embryogenesis. Required for normal development of the gonadotropin-releasing hormone (GnRH) neuronal system. Plays a role in neurite outgrowth in hippocampal cells. This is Fibroblast growth factor 8 (FGF8) from Homo sapiens (Human).